The chain runs to 238 residues: Large ribosomal subunit protein uL2 (238 aa).

The tract at residues 201-238 (FGGGGHQHPGRPKTIARGTSPGRTVGHVAARQTGRSRK) is disordered.

It belongs to the universal ribosomal protein uL2 family. Part of the 50S ribosomal subunit. Forms a bridge to the 30S subunit in the 70S ribosome.

One of the primary rRNA binding proteins. Required for association of the 30S and 50S subunits to form the 70S ribosome, for tRNA binding and peptide bond formation. It has been suggested to have peptidyltransferase activity; this is somewhat controversial. Makes several contacts with the 16S rRNA in the 70S ribosome. The protein is Large ribosomal subunit protein uL2 of Methanoregula boonei (strain DSM 21154 / JCM 14090 / 6A8).